The sequence spans 187 residues: Urease accessory protein UreE (187 aa).

Positions 154–187 (RANSAQGHGHSHGHSHSHDHHGYHHHGDGNWHKH) are disordered. The span at 162-177 (GHSHGHSHSHDHHGYH) shows a compositional bias: basic residues. Over residues 178 to 187 (HHGDGNWHKH) the composition is skewed to basic and acidic residues.

This sequence belongs to the UreE family.

The protein localises to the cytoplasm. In terms of biological role, involved in urease metallocenter assembly. Binds nickel. Probably functions as a nickel donor during metallocenter assembly. This is Urease accessory protein UreE from Actinobacillus pleuropneumoniae (Haemophilus pleuropneumoniae).